A 2188-amino-acid chain; its full sequence is Glutamate synthase 2 [NADH], chloroplastic (2188 aa).

A chloroplast-targeting transit peptide spans 1–30 (MSAAQGLALKLRAAPAAGGVRGEKRRRAAS). 2 disordered regions span residues 14 to 40 (APAA…ARPR) and 61 to 94 (VAPR…PESS). The segment covering 65-80 (ASASRQAEAGAGAGAA) has biased composition (low complexity). Residue Cys-107 is the Nucleophile of the active site. The Glutamine amidotransferase type-2 domain maps to 107-511 (CGVGFIAELS…PGMMLLVDFE (405 aa)). An FMN-binding site is contributed by 1198 to 1255 (LAETHQTLVANGLRGRAVLQTDGQMKTGRDVAVACLLGAEEFGFSTAPLITLGCIMMR). Positions 1251, 1257, and 1262 each coordinate [3Fe-4S] cluster. 1974-1988 (GGGDTGTDCIGTSIR) serves as a coordination point for NAD(+).

It belongs to the glutamate synthase family. Monomer. [3Fe-4S] cluster serves as cofactor. The cofactor is FAD. Requires FMN as cofactor. In terms of tissue distribution, expressed in leaf blades and sheaths.

The protein resides in the plastid. It localises to the chloroplast. The catalysed reaction is 2 L-glutamate + NAD(+) = L-glutamine + 2-oxoglutarate + NADH + H(+). The protein operates within amino-acid biosynthesis; L-glutamate biosynthesis via GLT pathway; L-glutamate from 2-oxoglutarate and L-glutamine (NAD(+) route): step 1/1. Its pathway is energy metabolism; nitrogen metabolism. Involved in glutamate biosynthesis. The chain is Glutamate synthase 2 [NADH], chloroplastic from Oryza sativa subsp. japonica (Rice).